A 38-amino-acid chain; its full sequence is Photosystem II reaction center protein L (38 aa).

The helical transmembrane segment at 17-37 threads the bilayer; that stretch reads SLYWGLLLIFVLAVLFSNYSF.

This sequence belongs to the PsbL family. PSII is composed of 1 copy each of membrane proteins PsbA, PsbB, PsbC, PsbD, PsbE, PsbF, PsbH, PsbI, PsbJ, PsbK, PsbL, PsbM, PsbT, PsbX, PsbY, PsbZ, Psb30/Ycf12, at least 3 peripheral proteins of the oxygen-evolving complex and a large number of cofactors. It forms dimeric complexes.

The protein localises to the plastid. The protein resides in the chloroplast thylakoid membrane. Its function is as follows. One of the components of the core complex of photosystem II (PSII). PSII is a light-driven water:plastoquinone oxidoreductase that uses light energy to abstract electrons from H(2)O, generating O(2) and a proton gradient subsequently used for ATP formation. It consists of a core antenna complex that captures photons, and an electron transfer chain that converts photonic excitation into a charge separation. This subunit is found at the monomer-monomer interface and is required for correct PSII assembly and/or dimerization. This Bowenia serrulata (Byfield fern) protein is Photosystem II reaction center protein L.